The primary structure comprises 158 residues: Trafficking protein particle complex subunit 6B (158 aa).

The protein belongs to the TRAPP small subunits family. BET3 subfamily. Homodimer. Part of a TRAPP complex. Heterodimer with TRAPPC3. The heterodimer TRAPPC6B-TRAPPC3 interacts with TRAPPC1 likely providing a core for TRAPP complex formation.

Its subcellular location is the golgi apparatus. It is found in the cis-Golgi network. The protein localises to the endoplasmic reticulum. In terms of biological role, component of a transport protein particle (TRAPP) complex that may function in specific stages of inter-organelle traffic. Specifically involved in the early development of neural circuitry, likely by controlling the frequency and amplitude of intracellular calcium transients implicated in the regulation of neuron differentiation and survival. The protein is Trafficking protein particle complex subunit 6B of Bos taurus (Bovine).